Consider the following 382-residue polypeptide: Dual-specificity RNA methyltransferase RlmN (382 aa).

E91 acts as the Proton acceptor in catalysis. The region spanning 97 to 339 (ETDRGTLCIS…TTVRKTRGDD (243 aa)) is the Radical SAM core domain. A disulfide bridge connects residues C104 and C344. The [4Fe-4S] cluster site is built by C111, C115, and C118. Residues 165–166 (GE), S197, 219–221 (SLH), and N301 each bind S-adenosyl-L-methionine. The active-site S-methylcysteine intermediate is C344.

It belongs to the radical SAM superfamily. RlmN family. It depends on [4Fe-4S] cluster as a cofactor.

It localises to the cytoplasm. The enzyme catalyses adenosine(2503) in 23S rRNA + 2 reduced [2Fe-2S]-[ferredoxin] + 2 S-adenosyl-L-methionine = 2-methyladenosine(2503) in 23S rRNA + 5'-deoxyadenosine + L-methionine + 2 oxidized [2Fe-2S]-[ferredoxin] + S-adenosyl-L-homocysteine. It catalyses the reaction adenosine(37) in tRNA + 2 reduced [2Fe-2S]-[ferredoxin] + 2 S-adenosyl-L-methionine = 2-methyladenosine(37) in tRNA + 5'-deoxyadenosine + L-methionine + 2 oxidized [2Fe-2S]-[ferredoxin] + S-adenosyl-L-homocysteine. Functionally, specifically methylates position 2 of adenine 2503 in 23S rRNA and position 2 of adenine 37 in tRNAs. m2A2503 modification seems to play a crucial role in the proofreading step occurring at the peptidyl transferase center and thus would serve to optimize ribosomal fidelity. This chain is Dual-specificity RNA methyltransferase RlmN, found in Polaromonas naphthalenivorans (strain CJ2).